We begin with the raw amino-acid sequence, 427 residues long: Ribose-phosphate pyrophosphokinase 1 (427 aa).

Mg(2+) contacts are provided by aspartate 128, histidine 130, and aspartate 143. Phosphoserine is present on residues serine 199, serine 218, serine 271, and serine 295.

It belongs to the ribose-phosphate pyrophosphokinase family.

The protein resides in the cytoplasm. The catalysed reaction is D-ribose 5-phosphate + ATP = 5-phospho-alpha-D-ribose 1-diphosphate + AMP + H(+). It functions in the pathway metabolic intermediate biosynthesis; 5-phospho-alpha-D-ribose 1-diphosphate biosynthesis; 5-phospho-alpha-D-ribose 1-diphosphate from D-ribose 5-phosphate (route I): step 1/1. Functionally, 5-phosphoribose 1-diphosphate synthase involved in nucleotide, histidine, and tryptophan biosynthesis. Active in heteromultimeric complexes with other 5-phosphoribose 1-diphosphate synthases (PRS2, PRS3, PRS4 and PRS5). The polypeptide is Ribose-phosphate pyrophosphokinase 1 (PRS1) (Saccharomyces cerevisiae (strain ATCC 204508 / S288c) (Baker's yeast)).